The following is a 271-amino-acid chain: NADPH-dependent 7-cyano-7-deazaguanine reductase (271 aa).

A substrate-binding site is contributed by 81–83 (IES). 83–84 (SK) provides a ligand contact to NADPH. Catalysis depends on Cys177, which acts as the Thioimide intermediate. The Proton donor role is filled by Asp184. Substrate is bound at residue 216-217 (HE). Residue 245–246 (RG) participates in NADPH binding.

Belongs to the GTP cyclohydrolase I family. QueF type 2 subfamily. Homodimer.

Its subcellular location is the cytoplasm. The enzyme catalyses 7-aminomethyl-7-carbaguanine + 2 NADP(+) = 7-cyano-7-deazaguanine + 2 NADPH + 3 H(+). It participates in tRNA modification; tRNA-queuosine biosynthesis. Functionally, catalyzes the NADPH-dependent reduction of 7-cyano-7-deazaguanine (preQ0) to 7-aminomethyl-7-deazaguanine (preQ1). The sequence is that of NADPH-dependent 7-cyano-7-deazaguanine reductase from Xanthomonas oryzae pv. oryzae (strain MAFF 311018).